A 230-amino-acid chain; its full sequence is tRNA (cytidine-2'-O-)-methyltransferase TrmJ (230 aa).

S-adenosyl-L-methionine contacts are provided by residues Thr-79–Gly-81, Gly-115, Ile-135, and Pro-142–Met-144.

Belongs to the class IV-like SAM-binding methyltransferase superfamily. RNA methyltransferase TrmH family. As to quaternary structure, homodimer.

The protein localises to the cytoplasm. The enzyme catalyses cytidine(32) in tRNA + S-adenosyl-L-methionine = 2'-O-methylcytidine(32) in tRNA + S-adenosyl-L-homocysteine + H(+). Catalyzes the formation of 2'O-methylated cytidine (Cm32) at position 32 in tRNA. In Methanocaldococcus jannaschii (strain ATCC 43067 / DSM 2661 / JAL-1 / JCM 10045 / NBRC 100440) (Methanococcus jannaschii), this protein is tRNA (cytidine-2'-O-)-methyltransferase TrmJ.